A 530-amino-acid polypeptide reads, in one-letter code: GMP synthase [glutamine-hydrolyzing] (530 aa).

The Glutamine amidotransferase type-1 domain occupies 4-205 (RILILDYGSQ…VKDICGCEGD (202 aa)). C84 serves as the catalytic Nucleophile. Catalysis depends on residues H179 and E181. In terms of domain architecture, GMPS ATP-PPase spans 206-398 (WNMPDYISEA…LGLPPQMVYR (193 aa)). 233–239 (SGGVDSS) contributes to the ATP binding site.

In terms of assembly, homodimer.

The enzyme catalyses XMP + L-glutamine + ATP + H2O = GMP + L-glutamate + AMP + diphosphate + 2 H(+). Its pathway is purine metabolism; GMP biosynthesis; GMP from XMP (L-Gln route): step 1/1. In terms of biological role, catalyzes the synthesis of GMP from XMP. This is GMP synthase [glutamine-hydrolyzing] from Bordetella bronchiseptica (strain ATCC BAA-588 / NCTC 13252 / RB50) (Alcaligenes bronchisepticus).